The chain runs to 823 residues: DNA topoisomerase 4 subunit A (823 aa).

Positions 30–496 (LPDIRDGLKP…KAIEIDTASL (467 aa)) constitute a Topo IIA-type catalytic domain. Tyr118 acts as the O-(5'-phospho-DNA)-tyrosine intermediate in catalysis.

Belongs to the type II topoisomerase GyrA/ParC subunit family. ParC type 2 subfamily. In terms of assembly, heterotetramer composed of ParC and ParE.

Its subcellular location is the cell membrane. The catalysed reaction is ATP-dependent breakage, passage and rejoining of double-stranded DNA.. Inhibited by quinolones, such as levofloxacin. In terms of biological role, topoisomerase IV is essential for chromosome segregation. It relaxes supercoiled DNA. Performs the decatenation events required during the replication of a circular DNA molecule. This Streptococcus pneumoniae serotype 4 (strain ATCC BAA-334 / TIGR4) protein is DNA topoisomerase 4 subunit A.